Consider the following 565-residue polypeptide: NAD-dependent malic enzyme (565 aa).

Catalysis depends on Tyr-104, which acts as the Proton donor. Arg-157 contacts NAD(+). Lys-175 serves as the catalytic Proton acceptor. 3 residues coordinate a divalent metal cation: Glu-246, Asp-247, and Asp-270. 2 residues coordinate NAD(+): Asp-270 and Asn-418.

Belongs to the malic enzymes family. In terms of assembly, homotetramer. It depends on Mg(2+) as a cofactor. Requires Mn(2+) as cofactor.

It carries out the reaction (S)-malate + NAD(+) = pyruvate + CO2 + NADH. It catalyses the reaction oxaloacetate + H(+) = pyruvate + CO2. This chain is NAD-dependent malic enzyme, found in Klebsiella pneumoniae (strain 342).